The chain runs to 365 residues: Succinyl-diaminopimelate desuccinylase (365 aa).

Residue His65 coordinates Zn(2+). The active site involves Asp67. Asp96 provides a ligand contact to Zn(2+). Glu126 (proton acceptor) is an active-site residue. Zn(2+) is bound by residues Glu127, Glu155, and His340.

It belongs to the peptidase M20A family. DapE subfamily. As to quaternary structure, homodimer. The cofactor is Zn(2+). Requires Co(2+) as cofactor.

It carries out the reaction N-succinyl-(2S,6S)-2,6-diaminopimelate + H2O = (2S,6S)-2,6-diaminopimelate + succinate. The protein operates within amino-acid biosynthesis; L-lysine biosynthesis via DAP pathway; LL-2,6-diaminopimelate from (S)-tetrahydrodipicolinate (succinylase route): step 3/3. Its function is as follows. Catalyzes the hydrolysis of N-succinyl-L,L-diaminopimelic acid (SDAP), forming succinate and LL-2,6-diaminopimelate (DAP), an intermediate involved in the bacterial biosynthesis of lysine and meso-diaminopimelic acid, an essential component of bacterial cell walls. This is Succinyl-diaminopimelate desuccinylase from Campylobacter jejuni subsp. jejuni serotype O:2 (strain ATCC 700819 / NCTC 11168).